We begin with the raw amino-acid sequence, 40 residues long: uncharacterized protein (40 aa).

This is an uncharacterized protein from Sulfolobus acidocaldarius (strain ATCC 33909 / DSM 639 / JCM 8929 / NBRC 15157 / NCIMB 11770).